The following is a 319-amino-acid chain: Ribosomal protein uL3 glutamine methyltransferase (319 aa).

This sequence belongs to the protein N5-glutamine methyltransferase family. PrmB subfamily.

It catalyses the reaction L-glutaminyl-[ribosomal protein uL3] + S-adenosyl-L-methionine = N(5)-methyl-L-glutaminyl-[ribosomal protein uL3] + S-adenosyl-L-homocysteine + H(+). In terms of biological role, methylates large ribosomal subunit protein uL3 on a specific glutamine residue. The polypeptide is Ribosomal protein uL3 glutamine methyltransferase (Bradyrhizobium diazoefficiens (strain JCM 10833 / BCRC 13528 / IAM 13628 / NBRC 14792 / USDA 110)).